Here is a 109-residue protein sequence, read N- to C-terminus: MSRISSLQDPFLNALRKEKVNVSVYLVNGIKLQGQVEAFDQFCIVLRNTVNQMVYKHAISTIVPAKSVRMVYSSFNPYHQNSNDEQDENVDDIHSDDLEIQENEGNIHE.

Positions 9-68 constitute a Sm domain; it reads DPFLNALRKEKVNVSVYLVNGIKLQGQVEAFDQFCIVLRNTVNQMVYKHAISTIVPAKSV. Residues 77–109 are disordered; sequence PYHQNSNDEQDENVDDIHSDDLEIQENEGNIHE.

The protein belongs to the Hfq family. In terms of assembly, homohexamer.

Functionally, RNA chaperone that binds small regulatory RNA (sRNAs) and mRNAs to facilitate mRNA translational regulation in response to envelope stress, environmental stress and changes in metabolite concentrations. Also binds with high specificity to tRNAs. In Francisella tularensis subsp. mediasiatica (strain FSC147), this protein is RNA-binding protein Hfq.